Reading from the N-terminus, the 150-residue chain is Large ribosomal subunit protein bL9 (150 aa).

This sequence belongs to the bacterial ribosomal protein bL9 family.

Functionally, binds to the 23S rRNA. This chain is Large ribosomal subunit protein bL9, found in Mycoplasmopsis pulmonis (strain UAB CTIP) (Mycoplasma pulmonis).